We begin with the raw amino-acid sequence, 442 residues long: Trigger factor (442 aa).

One can recognise a PPIase FKBP-type domain in the interval 162 to 247 (GDQVTIDAIG…IKAVHTSEPT (86 aa)).

Belongs to the FKBP-type PPIase family. Tig subfamily.

Its subcellular location is the cytoplasm. It carries out the reaction [protein]-peptidylproline (omega=180) = [protein]-peptidylproline (omega=0). Functionally, involved in protein export. Acts as a chaperone by maintaining the newly synthesized protein in an open conformation. Functions as a peptidyl-prolyl cis-trans isomerase. In Rickettsia canadensis (strain McKiel), this protein is Trigger factor.